The sequence spans 385 residues: 1-deoxy-D-xylulose 5-phosphate reductoisomerase (385 aa).

Thr-10, Gly-11, Ser-12, Ile-13, and Asn-124 together coordinate NADPH. Lys-125 contributes to the 1-deoxy-D-xylulose 5-phosphate binding site. Glu-126 contributes to the NADPH binding site. Asp-150 is a binding site for Mn(2+). 1-deoxy-D-xylulose 5-phosphate-binding residues include Ser-151, Glu-152, Ser-176, and His-199. Glu-152 serves as a coordination point for Mn(2+). An NADPH-binding site is contributed by Gly-205. Residues Ser-212, Asn-217, Lys-218, and Glu-221 each contribute to the 1-deoxy-D-xylulose 5-phosphate site. Glu-221 contributes to the Mn(2+) binding site.

The protein belongs to the DXR family. The cofactor is Mg(2+). Requires Mn(2+) as cofactor.

It catalyses the reaction 2-C-methyl-D-erythritol 4-phosphate + NADP(+) = 1-deoxy-D-xylulose 5-phosphate + NADPH + H(+). It participates in isoprenoid biosynthesis; isopentenyl diphosphate biosynthesis via DXP pathway; isopentenyl diphosphate from 1-deoxy-D-xylulose 5-phosphate: step 1/6. Its function is as follows. Catalyzes the NADPH-dependent rearrangement and reduction of 1-deoxy-D-xylulose-5-phosphate (DXP) to 2-C-methyl-D-erythritol 4-phosphate (MEP). The chain is 1-deoxy-D-xylulose 5-phosphate reductoisomerase from Clostridium botulinum (strain Alaska E43 / Type E3).